A 136-amino-acid polypeptide reads, in one-letter code: ATP synthase epsilon chain, plastid (136 aa).

Belongs to the ATPase epsilon chain family. F-type ATPases have 2 components, CF(1) - the catalytic core - and CF(0) - the membrane proton channel. CF(1) has five subunits: alpha(3), beta(3), gamma(1), delta(1), epsilon(1). CF(0) has three main subunits: a, b and c.

Its subcellular location is the plastid thylakoid membrane. Functionally, produces ATP from ADP in the presence of a proton gradient across the membrane. This is ATP synthase epsilon chain, plastid from Cuscuta reflexa (Southern Asian dodder).